The chain runs to 99 residues: Seminal vesicle secretory protein 6 (99 aa).

Residues 1–21 form the signal peptide; sequence MSPTSFFLLTMLLVLVTETAA.

The protein belongs to the SVP2/SVP5/SVP6 family. In terms of tissue distribution, testis.

The protein resides in the secreted. Its subcellular location is the extracellular space. This chain is Seminal vesicle secretory protein 6 (Svs6), found in Mus musculus (Mouse).